Here is a 762-residue protein sequence, read N- to C-terminus: Primary amine oxidase, lung isozyme (762 aa).

An N-terminal signal peptide occupies residues 1–16; the sequence is MFIFIFLSLWTLLVMG. Residues 23 to 54 are disordered; the sequence is GSEEGVGKQCHPSLPPRCPSRSPSDQPWTHPD. Asn-136 carries an N-linked (GlcNAc...) asparagine glycan. The cysteines at positions 197 and 198 are disulfide-linked. Thr-211 carries O-linked (GalNAc...) threonine glycosylation. 2 N-linked (GlcNAc...) asparagine glycosylation sites follow: Asn-231 and Asn-293. 383–393 serves as a coordination point for substrate; that stretch reads YMDACFGMGKF. Residue Asp-385 is the Proton acceptor of the active site. A disulfide bond links Cys-403 and Cys-429. 467 to 472 provides a ligand contact to substrate; that stretch reads LLNYDY. The active-site Schiff-base intermediate with substrate; via topaquinone is the Tyr-470. Position 470 is a 2',4',5'-topaquinone (Tyr-470). The Cu cation site is built by His-519 and His-521. Ca(2+) contacts are provided by Asp-528, Leu-529, Asp-530, and Glu-571. 577–584 provides a ligand contact to heparin; that stretch reads PLGGGSPR. Asn-617 carries N-linked (GlcNAc...) asparagine glycosylation. Residues Phe-662 and Asn-664 each coordinate Ca(2+). A glycan (N-linked (GlcNAc...) asparagine) is linked at Asn-665. Glu-666, Asp-672, and Leu-673 together coordinate Ca(2+). His-683 serves as a coordination point for Cu cation. A disulfide bond links Cys-733 and Cys-740.

It belongs to the copper/topaquinone oxidase family. As to quaternary structure, homodimer; disulfide-linked. Cu cation is required as a cofactor. The cofactor is Ca(2+). Requires L-topaquinone as cofactor. In terms of processing, topaquinone (TPQ) is generated by copper-dependent autoxidation of a specific tyrosyl residue. Expressed in lung, spleen, heart and kidney.

Its subcellular location is the secreted. It localises to the extracellular space. The enzyme catalyses a primary methyl amine + O2 + H2O = an aldehyde + H2O2 + NH4(+). The polypeptide is Primary amine oxidase, lung isozyme (Bos taurus (Bovine)).